Reading from the N-terminus, the 469-residue chain is MTVQTFTPNQTTTLDTAKKTIEQQSQELTPSGGNKIGFVSLGCPKNLVDSERILTQLRTEGYEIVNSYHDSDVVIVNTCGFIDSAVQESLDTIGEALKENGKVIVTGCLGAREDEIREVHPGVLGITGPHAYENVLEHVHQFAPKPEHNPFTSLVPDHGVKLTPKHYAYLKISEGCNHRCTFCIIPSMRGDLVSRPVGEILSEAERLKNAGVKELLVISQDTSAYGVDSKHSLGFANGSPVRQNIKALSEELGKMGIWVRLHYVYPYPHVDDLIPLMAEGKILPYLDIPFQHASPNVLKAMKRPGRAERTLDQIKKWREICPELVIRSTFIVGFPGETDEDFEMLLEWLKEAQLDRVGCFKYSPVEGAAANDIDDQISEEVKQERFERFMLVQQEISAAKLQKRIGSTMKVIIDEVDEEGAIGRTYADAPEIDGLVYLNGETSLKAGELVDVLIEHADEYDLWGSLVRA.

The 111-residue stretch at 34–144 (NKIGFVSLGC…VLEHVHQFAP (111 aa)) folds into the MTTase N-terminal domain. Residues C43, C79, C108, C176, C180, and C183 each coordinate [4Fe-4S] cluster. Positions 162–399 (LTPKHYAYLK…MLVQQEISAA (238 aa)) constitute a Radical SAM core domain. The region spanning 402–468 (QKRIGSTMKV…EYDLWGSLVR (67 aa)) is the TRAM domain.

This sequence belongs to the methylthiotransferase family. RimO subfamily. Requires [4Fe-4S] cluster as cofactor.

The protein resides in the cytoplasm. The enzyme catalyses L-aspartate(89)-[ribosomal protein uS12]-hydrogen + (sulfur carrier)-SH + AH2 + 2 S-adenosyl-L-methionine = 3-methylsulfanyl-L-aspartate(89)-[ribosomal protein uS12]-hydrogen + (sulfur carrier)-H + 5'-deoxyadenosine + L-methionine + A + S-adenosyl-L-homocysteine + 2 H(+). Functionally, catalyzes the methylthiolation of an aspartic acid residue of ribosomal protein uS12. In Vibrio vulnificus (strain YJ016), this protein is Ribosomal protein uS12 methylthiotransferase RimO.